A 700-amino-acid polypeptide reads, in one-letter code: Elongation factor G 2 (700 aa).

Residues 8 to 290 enclose the tr-type G domain; the sequence is ERYRNIGISA…AVVDYLPSPI (283 aa). GTP-binding positions include 17–24, 88–92, and 142–145; these read AHIDAGKT, DTPGH, and NKMD.

It belongs to the TRAFAC class translation factor GTPase superfamily. Classic translation factor GTPase family. EF-G/EF-2 subfamily.

The protein localises to the cytoplasm. In terms of biological role, catalyzes the GTP-dependent ribosomal translocation step during translation elongation. During this step, the ribosome changes from the pre-translocational (PRE) to the post-translocational (POST) state as the newly formed A-site-bound peptidyl-tRNA and P-site-bound deacylated tRNA move to the P and E sites, respectively. Catalyzes the coordinated movement of the two tRNA molecules, the mRNA and conformational changes in the ribosome. The chain is Elongation factor G 2 (fusB) from Ralstonia nicotianae (strain ATCC BAA-1114 / GMI1000) (Ralstonia solanacearum).